The sequence spans 420 residues: 3-phosphoshikimate 1-carboxyvinyltransferase (420 aa).

Lys20, Ser21, and Arg25 together coordinate 3-phosphoshikimate. Phosphoenolpyruvate is bound at residue Lys20. Arg119 contributes to the phosphoenolpyruvate binding site. 7 residues coordinate 3-phosphoshikimate: Ser161, Ser162, Gln163, Ser189, Asp303, Gln326, and Lys330. Gln163 contributes to the phosphoenolpyruvate binding site. Asp303 (proton acceptor) is an active-site residue. Residues Arg334, Arg375, and Lys400 each contribute to the phosphoenolpyruvate site.

This sequence belongs to the EPSP synthase family. Monomer.

The protein resides in the cytoplasm. The enzyme catalyses 3-phosphoshikimate + phosphoenolpyruvate = 5-O-(1-carboxyvinyl)-3-phosphoshikimate + phosphate. It functions in the pathway metabolic intermediate biosynthesis; chorismate biosynthesis; chorismate from D-erythrose 4-phosphate and phosphoenolpyruvate: step 6/7. Catalyzes the transfer of the enolpyruvyl moiety of phosphoenolpyruvate (PEP) to the 5-hydroxyl of shikimate-3-phosphate (S3P) to produce enolpyruvyl shikimate-3-phosphate and inorganic phosphate. This Dehalococcoides mccartyi (strain ATCC BAA-2100 / JCM 16839 / KCTC 5957 / BAV1) protein is 3-phosphoshikimate 1-carboxyvinyltransferase.